The following is a 1680-amino-acid chain: Alpha-protein kinase 3 (1680 aa).

The tract at residues 1-37 (MGSRRAAGRGWGLGGRAGAGGDSEDDGPVWTPGPASR) is disordered. Gly residues predominate over residues 9-21 (RGWGLGGRAGAGG). Positions 77 to 173 (PLFETTLKSR…SGVLEVGTMT (97 aa)) constitute an Ig-like 1 domain. Ser-229 carries the phosphoserine modification. Disordered stretches follow at residues 237–288 (STPV…NGED), 302–759 (ELGP…CPRE), 785–950 (SEEA…GTRS), 1078–1128 (EGSA…LTGL), and 1147–1244 (PKVR…QRKA). Positions 320 to 337 (KDEESKPGEQKLELEKAE) are enriched in basic and acidic residues. Positions 339–353 (SQCSSENVVPSTDKP) are enriched in polar residues. Residues 402-426 (APAPAPVPAPALAPAPVPVPAPTPV) show a composition bias toward pro residues. Residues 514–532 (ESTTTSLSSQTSESMAQSL) show a composition bias toward low complexity. Polar residues-rich tracts occupy residues 557–566 (SPLQGQTSHK) and 731–744 (ETQS…SLSS). Residues 785 to 796 (SEEAAFRSHEDG) show a composition bias toward basic and acidic residues. Over residues 917–932 (SPTQSHPPEAMATSSE) the composition is skewed to polar residues. Composition is skewed to basic and acidic residues over residues 1087–1111 (ERTS…ESRT) and 1151–1165 (AGSD…ERES). Position 1199 is a phosphoserine (Ser-1199). Over residues 1231-1244 (DEGKQEALAKQRKA) the composition is skewed to basic and acidic residues. The region spanning 1251 to 1339 (PQVIRKIRVE…GSASTDFCLS (89 aa)) is the Ig-like 2 domain. Cys-1273 and Cys-1323 form a disulfide bridge. In terms of domain architecture, Alpha-type protein kinase spans 1367-1600 (KGLADSGCWG…YCDMLGLKPL (234 aa)). Residues 1603 to 1680 (PEAAHPQAKA…DGSSKAQSMR (78 aa)) are disordered. 2 stretches are compositionally biased toward polar residues: residues 1639 to 1660 (PQGS…QAAT) and 1671 to 1680 (DGSSKAQSMR).

Belongs to the protein kinase superfamily. Alpha-type protein kinase family. ALPK subfamily. Expressed in the heart and skeletal muscle of adult mice.

The protein resides in the nucleus. The enzyme catalyses L-seryl-[protein] + ATP = O-phospho-L-seryl-[protein] + ADP + H(+). The catalysed reaction is L-threonyl-[protein] + ATP = O-phospho-L-threonyl-[protein] + ADP + H(+). Functionally, involved in cardiomyocyte differentiation. The polypeptide is Alpha-protein kinase 3 (Mus musculus (Mouse)).